A 163-amino-acid polypeptide reads, in one-letter code: Odorant-binding protein 1a (163 aa).

Residues 1–16 form the signal peptide; the sequence is MAKFLLLALTFGLAHA. Intrachain disulfides connect cysteine 50–cysteine 54 and cysteine 69–cysteine 161.

This sequence belongs to the calycin superfamily. Lipocalin family. In terms of assembly, may form a heterodimer with OBP1B. The N-terminus may be blocked. As to expression, expressed in nasal mucosa (at protein level). Specifically detected in septal and lateral nasal glands.

Its subcellular location is the secreted. Binds the chemical odorant 2-isobutyl-3-methoxypyrazine. The sequence is that of Odorant-binding protein 1a from Mus musculus (Mouse).